Consider the following 197-residue polypeptide: UPF0314 protein NGR_c32320 (197 aa).

3 consecutive transmembrane segments (helical) span residues 16–36, 66–86, and 152–172; these read WIWLIACLGVVAIQILTQHLM, WYTPSHIIHGFLFYGLGYLLL, and LPVAVTVTIAIVLELFTGWII.

The protein belongs to the UPF0314 family.

The protein resides in the cell membrane. In Sinorhizobium fredii (strain NBRC 101917 / NGR234), this protein is UPF0314 protein NGR_c32320.